A 217-amino-acid chain; its full sequence is tRNA 5-hydroxyuridine methyltransferase (217 aa).

S-adenosyl-L-methionine is bound by residues Met38, Ser68, Glu85, 113-114, and Asp133; that span reads DA. Mg(2+) contacts are provided by Asp133, Asp159, and Asn160.

Belongs to the class I-like SAM-binding methyltransferase superfamily. Cation-dependent O-methyltransferase family. Homodimer.

It carries out the reaction 5-hydroxyuridine(34) in tRNA + S-adenosyl-L-methionine = 5-methoxyuridine(34) in tRNA + S-adenosyl-L-homocysteine + H(+). Its function is as follows. Catalyzes the methylation of 5-hydroxyuridine (ho5U) to form 5-methoxyuridine (mo5U) at position 34 in tRNAs. The sequence is that of tRNA 5-hydroxyuridine methyltransferase from Bacillus subtilis (strain 168).